Here is a 360-residue protein sequence, read N- to C-terminus: DNA integrity scanning protein DisA (360 aa).

The region spanning 9–147 (DDEIIEVLRM…GSRKYILRET (139 aa)) is the DAC domain. Residues Gly76, Leu94, and 107–111 (TRHKT) each bind ATP.

The protein belongs to the DisA family. Homooctamer. Mg(2+) serves as cofactor.

It catalyses the reaction 2 ATP = 3',3'-c-di-AMP + 2 diphosphate. In terms of biological role, participates in a DNA-damage check-point that is active prior to asymmetric division when DNA is damaged. DisA forms globular foci that rapidly scan along the chromosomes during sporulation, searching for lesions. When a lesion is present, DisA pauses at the lesion site. This triggers a cellular response that culminates in a temporary block in sporulation initiation. Also has diadenylate cyclase activity, catalyzing the condensation of 2 ATP molecules into cyclic di-AMP (c-di-AMP). c-di-AMP acts as a signaling molecule that couples DNA integrity with progression of sporulation. The rise in c-di-AMP level generated by DisA while scanning the chromosome, operates as a positive signal that advances sporulation; upon encountering a lesion, the DisA focus arrests at the damaged site and halts c-di-AMP synthesis. This is DNA integrity scanning protein DisA from Acetivibrio thermocellus (strain ATCC 27405 / DSM 1237 / JCM 9322 / NBRC 103400 / NCIMB 10682 / NRRL B-4536 / VPI 7372) (Clostridium thermocellum).